Here is a 182-residue protein sequence, read N- to C-terminus: Translation initiation factor IF-3 (182 aa).

The protein belongs to the IF-3 family. As to quaternary structure, monomer.

The protein resides in the cytoplasm. IF-3 binds to the 30S ribosomal subunit and shifts the equilibrium between 70S ribosomes and their 50S and 30S subunits in favor of the free subunits, thus enhancing the availability of 30S subunits on which protein synthesis initiation begins. In Thermosynechococcus vestitus (strain NIES-2133 / IAM M-273 / BP-1), this protein is Translation initiation factor IF-3.